The chain runs to 355 residues: Isopentenyl-diphosphate delta-isomerase (355 aa).

Position 9–10 (arginine 9–lysine 10) interacts with substrate. FMN-binding positions include alanine 67–threonine 69, serine 97, and asparagine 125. Serine 97–arginine 99 contributes to the substrate binding site. Glutamine 161 is a binding site for substrate. Glutamate 162 is a Mg(2+) binding site. FMN-binding positions include lysine 197, threonine 227, glycine 276–arginine 278, and alanine 297–leucine 298.

The protein belongs to the IPP isomerase type 2 family. As to quaternary structure, homooctamer. Dimer of tetramers. FMN serves as cofactor. The cofactor is NADPH. Mg(2+) is required as a cofactor.

Its subcellular location is the cytoplasm. It catalyses the reaction isopentenyl diphosphate = dimethylallyl diphosphate. Functionally, involved in the biosynthesis of isoprenoids. Catalyzes the 1,3-allylic rearrangement of the homoallylic substrate isopentenyl (IPP) to its allylic isomer, dimethylallyl diphosphate (DMAPP). This Methanococcus maripaludis (strain DSM 14266 / JCM 13030 / NBRC 101832 / S2 / LL) protein is Isopentenyl-diphosphate delta-isomerase.